A 1783-amino-acid polypeptide reads, in one-letter code: 6-methylsalicylic acid synthase (1783 aa).

Over residues 1–31 (MITSTSSTEVLTPANGSDDSKGTTTPATSSG) the composition is skewed to polar residues. A disordered region spans residues 1–40 (MITSTSSTEVLTPANGSDDSKGTTTPATSSGDPEMHDDLL). The Ketosynthase family 3 (KS3) domain occupies 45 to 474 (HDDVAIIGMA…GTVSHAIIEA (430 aa)). Catalysis depends on for beta-ketoacyl synthase activity residues Cys217, His352, and His394. Positions 587-884 (WVFSGHGAQW…TPTMVRKQPA (298 aa)) are malonyl-CoA:ACP transacylase (MAT) domain. Ser673 functions as the For acyl/malonyl transferase activity in the catalytic mechanism. Residues 942–1215 (THKPAANDLL…AFAGVEGESL (274 aa)) are product template (PT) domain. The segment at 948 to 1064 (NDLLGTRTAL…ATVGADATPS (117 aa)) is N-terminal hotdog fold. The PKS/mFAS DH domain maps to 948-1216 (NDLLGTRTAL…FAGVEGESLS (269 aa)). His980 serves as the catalytic Proton acceptor; for dehydratase activity. The segment at 1078-1216 (PQKLSDSFSI…FAGVEGESLS (139 aa)) is C-terminal hotdog fold. The Proton donor; for dehydratase activity role is filled by Asp1130. Residues 1707–1781 (EYVLVVVKKC…HLVEYFCQVL (75 aa)) form the Carrier domain. Ser1741 carries the O-(pantetheine 4'-phosphoryl)serine modification.

The enzyme catalyses 3 malonyl-CoA + acetyl-CoA + NADPH + 3 H(+) = 6-methylsalicylate + 3 CO2 + NADP(+) + 4 CoA + H2O. It functions in the pathway secondary metabolite biosynthesis; terpenoid biosynthesis. Its function is as follows. Non-reducing polyketide synthase; part of the gene cluster that mediates the biosynthesis of macrophorins, isoprenoid epoxycyclohexenones containing cyclized drimane moieties. The first step of the pathway is the synthesis of 6-methylsalicylic acid (6-MSA) by the polyketide synthase macA. 6-MSA is then converted to m-cresol by the decarboxylase macB. The cytochrome P450 monooxygenase macC then catalyzes the oxidation of m-cresol to toluquinol. Epoxidation of toluquinol is then performed by the short chain dehydrogenase macD, with the help of macE, and a further prenylation by macG leads to 7-deacetoxyyanuthone A. The next step is the hydroxylation of C-22 of 7-deacetoxyyanuthone A by the cytochrome P450 monooxygenase macH to yield 22-deacetylyanuthone A. O-Mevalon transferase macI then attaches mevalon to the hydroxyl group of 22-deacetylyanuthone A to produce yanuthone E. The terpene cyclase macJ catalyzes the cyclization of 22-deacetylyanuthone A to macrophorin A. MacJ is also able to catalyze cyclization of yanuthone E and 7-deacetoxyyanuthone A to their corresponding macrophorins. The macJ products can be further modified by macH and macJ, as well as by the FAD-dependent monooxygenase macF, to produce additional macrophorins, including 4'-oxomacrophorin A, 4'-oxomacrophorin D and 4'-oxomacrophorin E. The sequence is that of 6-methylsalicylic acid synthase from Penicillium terrestre.